The sequence spans 377 residues: uncharacterized protein (377 aa).

The interval 1 to 46 is disordered; it reads MLAGLRRRGSMTTPPGPEIPPPHQGGFYSAGHHPQRPWPETPPPKT. Composition is skewed to pro residues over residues 14-23 and 36-45; these read PPGPEIPPPH and RPWPETPPPK. A helical transmembrane segment spans residues 53–73; the sequence is MLGAVALLAVVGVTVAVTLAV. The disordered stretch occupies residues 77 to 107; it reads DKRDAIPPGSGVSGSPTASDIASADDSGPVS.

Its subcellular location is the cell inner membrane. Functionally, may be involved in the ESX-1 / type VII specialized secretion system (T7SS), which exports several proteins including EsxA and EsxB. Involved in DNA conjugation in the recipient strain. This is an uncharacterized protein from Mycolicibacterium smegmatis (strain MKD8) (Mycobacterium smegmatis).